The following is a 90-amino-acid chain: Probable Fe(2+)-trafficking protein (90 aa).

The protein belongs to the Fe(2+)-trafficking protein family.

Functionally, could be a mediator in iron transactions between iron acquisition and iron-requiring processes, such as synthesis and/or repair of Fe-S clusters in biosynthetic enzymes. This chain is Probable Fe(2+)-trafficking protein, found in Variovorax paradoxus (strain S110).